An 879-amino-acid chain; its full sequence is Translation initiation factor IF-2 (879 aa).

2 disordered regions span residues 45-216 (AGHM…ERKR) and 228-293 (SYEE…EKPV). Basic and acidic residues-rich tracts occupy residues 60-72 (NAAKSDNKSDKNS), 83-99 (RKTDARKSQSSEKKISP), and 107-163 (AEKK…ERLQ). Positions 164-173 (MEAALQAQMQ) are enriched in low complexity. 3 stretches are compositionally biased toward basic and acidic residues: residues 174-216 (EQER…ERKR), 228-271 (SYEE…ERRN), and 280-291 (RNNDNKKGKFEK). The tr-type G domain occupies 380-549 (VRAPVVTIMG…LIQAEMLELT (170 aa)). The G1 stretch occupies residues 389–396 (GHVDHGKT). 389 to 396 (GHVDHGKT) provides a ligand contact to GTP. A G2 region spans residues 414-418 (GITQH). Positions 435 to 438 (DTPG) are G3. Residues 435–439 (DTPGH) and 489–492 (NKMD) each bind GTP. The G4 stretch occupies residues 489–492 (NKMD). The tract at residues 525–527 (SAK) is G5.

The protein belongs to the TRAFAC class translation factor GTPase superfamily. Classic translation factor GTPase family. IF-2 subfamily.

It localises to the cytoplasm. In terms of biological role, one of the essential components for the initiation of protein synthesis. Protects formylmethionyl-tRNA from spontaneous hydrolysis and promotes its binding to the 30S ribosomal subunits. Also involved in the hydrolysis of GTP during the formation of the 70S ribosomal complex. The protein is Translation initiation factor IF-2 of Dichelobacter nodosus (strain VCS1703A).